The following is a 324-amino-acid chain: NADH-cytochrome b5 reductase 2 (324 aa).

The helical transmembrane segment at 31–47 (IPLIGGITLAAGAGYYY) threads the bilayer. The 109-residue stretch at 70–178 (QGWIGLKLAH…KGPLPKYPWE (109 aa)) folds into the FAD-binding FR-type domain. 181–216 (KHDHICLIAGGTGITPMYQLVRKIFSNPEDKTKVTL) contributes to the FAD binding site.

The protein belongs to the flavoprotein pyridine nucleotide cytochrome reductase family. FAD is required as a cofactor.

Its subcellular location is the mitochondrion outer membrane. The catalysed reaction is 2 Fe(III)-[cytochrome b5] + NADH = 2 Fe(II)-[cytochrome b5] + NAD(+) + H(+). Functionally, may mediate the reduction of outer membrane cytochrome b5. The polypeptide is NADH-cytochrome b5 reductase 2 (MCR1) (Ajellomyces capsulatus (strain NAm1 / WU24) (Darling's disease fungus)).